Here is a 441-residue protein sequence, read N- to C-terminus: Ribosomal protein uS12 methylthiotransferase RimO (441 aa).

One can recognise an MTTase N-terminal domain in the interval 8-118 (PKIGFVSLGC…VLQHVHHYVP (111 aa)). Residues Cys-17, Cys-53, Cys-82, Cys-150, Cys-154, and Cys-157 each coordinate [4Fe-4S] cluster. The Radical SAM core domain maps to 136-373 (LTPRHYAYLK…MQLQQQISAE (238 aa)). In terms of domain architecture, TRAM spans 376–441 (QEKVGREILV…DEYDLWGSRV (66 aa)).

This sequence belongs to the methylthiotransferase family. RimO subfamily. [4Fe-4S] cluster is required as a cofactor.

The protein localises to the cytoplasm. It catalyses the reaction L-aspartate(89)-[ribosomal protein uS12]-hydrogen + (sulfur carrier)-SH + AH2 + 2 S-adenosyl-L-methionine = 3-methylsulfanyl-L-aspartate(89)-[ribosomal protein uS12]-hydrogen + (sulfur carrier)-H + 5'-deoxyadenosine + L-methionine + A + S-adenosyl-L-homocysteine + 2 H(+). Functionally, catalyzes the methylthiolation of an aspartic acid residue of ribosomal protein uS12. This is Ribosomal protein uS12 methylthiotransferase RimO from Salmonella paratyphi A (strain ATCC 9150 / SARB42).